A 444-amino-acid chain; its full sequence is Protein CPn_0808/CP_1063/CPj0808/CpB0837 (444 aa).

A compositionally biased stretch (polar residues) spans methionine 1–proline 13. The tract at residues methionine 1–threonine 124 is disordered. Over residues leucine 15–glutamine 24 the composition is skewed to low complexity. The segment covering lysine 25–glycine 42 has biased composition (polar residues). Basic and acidic residues predominate over residues serine 77 to glycine 86. Residues serine 88–alanine 103 show a composition bias toward low complexity. Positions arginine 113–threonine 124 are enriched in polar residues.

It belongs to the chlamydial CPn_0808/CT_579/TC_0868 family.

This is Protein CPn_0808/CP_1063/CPj0808/CpB0837 from Chlamydia pneumoniae (Chlamydophila pneumoniae).